The chain runs to 305 residues: Ribonuclease BN (305 aa).

Zn(2+) is bound by residues His64, His66, Asp68, His69, His141, Asp212, and His270. The Proton acceptor role is filled by Asp68.

This sequence belongs to the RNase Z family. RNase BN subfamily. In terms of assembly, homodimer. It depends on Zn(2+) as a cofactor.

Functionally, zinc phosphodiesterase, which has both exoribonuclease and endoribonuclease activities. The polypeptide is Ribonuclease BN (Salmonella paratyphi C (strain RKS4594)).